Here is a 527-residue protein sequence, read N- to C-terminus: SusD-like protein P25 (527 aa).

Residues 1-15 (MKIQNIIVYVFLIFS) form the signal peptide. Cys16 carries N-palmitoyl cysteine lipidation. Residue Cys16 is the site of S-diacylglycerol cysteine attachment.

The protein belongs to the SusD family.

The protein localises to the cell outer membrane. In terms of biological role, polysaccharide-binding protein probably involved in ulvan degradation. Ulvan is the main polysaccharide component of the Ulvales (green seaweed) cell wall. It is composed of disaccharide building blocks comprising 3-sulfated rhamnose (Rha3S) linked to D-glucuronic acid (GlcA), L-iduronic acid (IduA), or D-xylose (Xyl). The SusD-like protein may mediate ulvan oligomer-binding before transport in the periplasm for further degradation. The sequence is that of SusD-like protein P25 from Formosa agariphila (strain DSM 15362 / KCTC 12365 / LMG 23005 / KMM 3901 / M-2Alg 35-1).